The primary structure comprises 307 residues: Low-salt glycan biosynthesis hexosyltransferase Agl10 (307 aa).

The protein belongs to the glycosyltransferase 2 family.

It functions in the pathway protein modification; protein glycosylation. The protein operates within cell surface structure biogenesis; S-layer biogenesis. In terms of biological role, hexosyltransferase involved in N-glycan biosynthetic pathway that takes place under low-salt conditions (1.75 M instead of 3.4 M). Participates in the formation of the tetrasaccharide present at 'Asn-532' of S-layer glycoprotein Csg, consisting of a sulfated hexose, 2 hexoses and rhamnose. Involved in the addition of final rhamnose (sugar 4) of the tetrasaccharide on the dolichol phosphate carrier. The protein is Low-salt glycan biosynthesis hexosyltransferase Agl10 (agl10) of Haloferax volcanii (strain ATCC 29605 / DSM 3757 / JCM 8879 / NBRC 14742 / NCIMB 2012 / VKM B-1768 / DS2) (Halobacterium volcanii).